The chain runs to 171 residues: Sec-independent protein translocase protein TatB (171 aa).

The chain crosses the membrane as a helical span at residues 1–21; it reads MFDIGFSELLLVFIIGLVVLG. Positions 89-171 are disordered; it reads AESMKRSYVA…APSPSSSDKP (83 aa). Over residues 100-123 the composition is skewed to basic and acidic residues; it reads DPEKASDEAHTIHNPVVKDNETAH. Residues 130–139 are compositionally biased toward polar residues; it reads AAQTQASSPE.

This sequence belongs to the TatB family. In terms of assembly, the Tat system comprises two distinct complexes: a TatABC complex, containing multiple copies of TatA, TatB and TatC subunits, and a separate TatA complex, containing only TatA subunits. Substrates initially bind to the TatABC complex, which probably triggers association of the separate TatA complex to form the active translocon.

It is found in the cell inner membrane. In terms of biological role, part of the twin-arginine translocation (Tat) system that transports large folded proteins containing a characteristic twin-arginine motif in their signal peptide across membranes. Together with TatC, TatB is part of a receptor directly interacting with Tat signal peptides. TatB may form an oligomeric binding site that transiently accommodates folded Tat precursor proteins before their translocation. The sequence is that of Sec-independent protein translocase protein TatB from Escherichia coli O1:K1 / APEC.